A 326-amino-acid chain; its full sequence is GTP 3',8-cyclase (326 aa).

The Radical SAM core domain occupies 7-240 (AFARKFYYLR…AQVFHHSDYQ (234 aa)). R16 contacts GTP. [4Fe-4S] cluster contacts are provided by C23 and C27. Y29 contacts S-adenosyl-L-methionine. C30 lines the [4Fe-4S] cluster pocket. R65 is a binding site for GTP. Position 69 (G69) interacts with S-adenosyl-L-methionine. Position 96 (T96) interacts with GTP. S120 contacts S-adenosyl-L-methionine. Position 157 (K157) interacts with GTP. M191 contributes to the S-adenosyl-L-methionine binding site. [4Fe-4S] cluster-binding residues include C254 and C257. A GTP-binding site is contributed by 259-261 (RLR). C271 lines the [4Fe-4S] cluster pocket.

It belongs to the radical SAM superfamily. MoaA family. As to quaternary structure, monomer and homodimer. [4Fe-4S] cluster serves as cofactor.

The enzyme catalyses GTP + AH2 + S-adenosyl-L-methionine = (8S)-3',8-cyclo-7,8-dihydroguanosine 5'-triphosphate + 5'-deoxyadenosine + L-methionine + A + H(+). The protein operates within cofactor biosynthesis; molybdopterin biosynthesis. Functionally, catalyzes the cyclization of GTP to (8S)-3',8-cyclo-7,8-dihydroguanosine 5'-triphosphate. This chain is GTP 3',8-cyclase, found in Yersinia pestis.